The primary structure comprises 816 residues: MSSIARPPDPCLVAVVLIARSRAGPRFVFHYPPRPLADNALRPPKARRTSRSRSRQNSKGNDSTSSDDSHSSSDEDEEEAPSQNLNNSNNSNNNSYIAGSRRSSNFGLDDSNTLSENQRPGSISSSRAYLRKRGANSDAETDSGVGSDRQEDGSRESDGPNRVPWESILGLPVDVWEKLLSPSRSWHKRRFELGINDLAFVGWPVFVREDGNWRKQRRKKKKKQRAEWESGELGHNDATEDSQDDGNDAVAASTETLSPFSALHPISQRPSVPNSRSSQMSSEPLDADDKDMMTMFNVVFVLDPPLLEYSMRVREIYDNVIKKFSKALKWEQSRTNYVWRECQHILNIKEKAKEKRSSLNSLYADIISQSSLARAIRTLYTSISASKIASVTLSPDVSISLQIPPLTSTPYLPGPTDQAYPGLWLTTADSISPADDPMTDDNSAPHQVLAKHFALLLLDNEATIIKDVEAAGGALAPPLVHYIRCSSPTKSFVQISQISGMPLPTIQFLASHLVYWRRARAIPPLHQRDTYIVSPNCDLSKLEVASAAYKVAFPTLPSLPKMLSALSGTPRPYGNFIPSKDHKATYFLILAWLLRGGWVTQLRSFARVKVSPEIKMAVELAIRREEVDKYLSKGKPPVATSDKEDSVNDERTEGSDFDDASSSSSSSLASHGSGDATPMPNRFRADTGVDLTHSLLDQTASLKTSSLILLPHKVSPLESRWLDEIVARFPDNAPDFVGNTTEVDSATPIPAKSLKEVWPTYLKYFNGYDALEKIPVREGLKRKLVSQVLTRLGLVTGQSSTELDPREQVLVSFRHW.

Residues 1–23 (MSSIARPPDPCLVAVVLIARSRA) form the signal peptide. 4 disordered regions span residues 26–166 (RFVF…VPWE), 213–249 (WRKQ…GNDA), 262–287 (ALHP…PLDA), and 632–684 (SKGK…NRFR). A compositionally biased stretch (basic residues) spans 44-56 (PKARRTSRSRSRQ). The span at 82–95 (SQNLNNSNNSNNNS) shows a compositional bias: low complexity. A compositionally biased stretch (polar residues) spans 101–127 (RRSSNFGLDDSNTLSENQRPGSISSSR). A compositionally biased stretch (basic and acidic residues) spans 148–159 (DRQEDGSRESDG). Over residues 214–224 (RKQRRKKKKKQ) the composition is skewed to basic residues. The span at 225-238 (RAEWESGELGHNDA) shows a compositional bias: basic and acidic residues. Polar residues predominate over residues 268 to 282 (QRPSVPNSRSSQMSS). Basic and acidic residues predominate over residues 641–654 (SDKEDSVNDERTEG). Residues 660–676 (ASSSSSSSLASHGSGDA) show a composition bias toward low complexity.

This sequence belongs to the NPR3 family.

In terms of biological role, mediates inactivation of the TORC1 complex in response to amino acid starvation. Required for meiotic nuclear division. This Emericella nidulans (strain FGSC A4 / ATCC 38163 / CBS 112.46 / NRRL 194 / M139) (Aspergillus nidulans) protein is Nitrogen permease regulator 3 (npr3).